Here is a 115-residue protein sequence, read N- to C-terminus: Ribonuclease P protein component (115 aa).

Belongs to the RnpA family. As to quaternary structure, consists of a catalytic RNA component (M1 or rnpB) and a protein subunit.

It catalyses the reaction Endonucleolytic cleavage of RNA, removing 5'-extranucleotides from tRNA precursor.. Functionally, RNaseP catalyzes the removal of the 5'-leader sequence from pre-tRNA to produce the mature 5'-terminus. It can also cleave other RNA substrates such as 4.5S RNA. The protein component plays an auxiliary but essential role in vivo by binding to the 5'-leader sequence and broadening the substrate specificity of the ribozyme. The chain is Ribonuclease P protein component from Bacillus cereus (strain B4264).